The following is a 148-amino-acid chain: Large ribosomal subunit protein uL13 (148 aa).

It belongs to the universal ribosomal protein uL13 family. Part of the 50S ribosomal subunit.

Its function is as follows. This protein is one of the early assembly proteins of the 50S ribosomal subunit, although it is not seen to bind rRNA by itself. It is important during the early stages of 50S assembly. The sequence is that of Large ribosomal subunit protein uL13 from Sulfolobus acidocaldarius (strain ATCC 33909 / DSM 639 / JCM 8929 / NBRC 15157 / NCIMB 11770).